The following is a 181-amino-acid chain: uncharacterized protein (181 aa).

A disordered region spans residues 25–47 (ELANEVSAGDEEPYDDDIWESED). Positions 32 to 47 (AGDEEPYDDDIWESED) are enriched in acidic residues. Residues 149-169 (ILTLILLSCGLLMLFIGYPIL) traverse the membrane as a helical segment.

Its subcellular location is the cytoplasm. The protein resides in the membrane. This is an uncharacterized protein from Schizosaccharomyces pombe (strain 972 / ATCC 24843) (Fission yeast).